The chain runs to 305 residues: Aquaporin-1 (305 aa).

Residues 1-34 are disordered; that stretch reads MSSNDSNDTDKQHTRLDPTGVDDAYIPPEQPETK. Topologically, residues 1-48 are cytoplasmic; it reads MSSNDSNDTDKQHTRLDPTGVDDAYIPPEQPETKHHRFKISKDTLRNH. Residues 49 to 69 traverse the membrane as a helical segment; the sequence is FIAAAGEFCGTFMFLWCAYVI. Residues 70-91 lie on the Extracellular side of the membrane; the sequence is CNVANHDVALVAAPDGSHPGQL. Residues 92 to 112 traverse the membrane as a helical segment; that stretch reads IMIAIGFGFSVMFSIWCFAGV. Topologically, residues 113-136 are cytoplasmic; the sequence is SGGALNPAMSLSLCLARAVSPTRC. Residues 118-120 carry the NPA 1 motif; it reads NPA. The chain crosses the membrane as a helical span at residues 137 to 157; sequence VVMWVSQIVAGMAAGGAASAM. At 158–176 the chain is on the extracellular side; sequence TPGEVLFANSLGLGCSRTR. Residues 177 to 197 form a helical membrane-spanning segment; that stretch reads GLFLEMFGTAILCLTVLMTAV. Residues 198-203 are Cytoplasmic-facing; it reads EKRETN. A helical membrane pass occupies residues 204 to 224; it reads FMAALPIGISLFIAHVALTAY. Residues 225 to 248 lie on the Extracellular side of the membrane; it reads TGTGVNPARSLGAAVAARYFPHYH. Residues 230-232 carry the NPA 2 motif; sequence NPA. Residues 249 to 269 form a helical membrane-spanning segment; the sequence is WIYWIGTLLGSILAWSVWQLL. Topologically, residues 270 to 305 are cytoplasmic; sequence QILDYTTYVTAEKAASTKEKAQKKGETSSSSAVAEV. Residues 286–295 show a composition bias toward basic and acidic residues; it reads TKEKAQKKGE. Residues 286 to 305 form a disordered region; that stretch reads TKEKAQKKGETSSSSAVAEV. Residues 296–305 show a composition bias toward polar residues; sequence TSSSSAVAEV.

The protein belongs to the MIP/aquaporin (TC 1.A.8) family.

The protein resides in the endoplasmic reticulum membrane. Its subcellular location is the cell membrane. Its function is as follows. Water channel required to facilitate the transport of water across membranes. Involved in sporulation, freeze tolerance and osmotolerance. Is non-functional in most laboratory strains. This is Aquaporin-1 (AQY1) from Saccharomyces cerevisiae (strain YJM789) (Baker's yeast).